Here is a 427-residue protein sequence, read N- to C-terminus: G2/mitotic-specific cyclin-3 (427 aa).

Over residues 1–12 the composition is skewed to polar residues; that stretch reads MHHNSQSLSSGH. Disordered regions lie at residues 1–29 and 89–126; these read MHHN…NLKH and SVAQ…EDQE. Positions 89 to 105 are enriched in basic and acidic residues; it reads SVAQRKEADHNDLLTDR. The span at 106-126 shows a compositional bias: acidic residues; sequence EQEEPVEDDGESEEDEEEDQE.

This sequence belongs to the cyclin family. Cyclin AB subfamily.

Its function is as follows. Essential for the control of the cell cycle at the G2/M (mitosis) transition. Interacts with the CDC2 protein kinase to form MPF. G2/M cyclins accumulate steadily during G2 and are abruptly destroyed at mitosis. The sequence is that of G2/mitotic-specific cyclin-3 (CLB3) from Saccharomyces cerevisiae (strain ATCC 204508 / S288c) (Baker's yeast).